We begin with the raw amino-acid sequence, 370 residues long: Probable dual-specificity RNA methyltransferase RlmN (370 aa).

E91 functions as the Proton acceptor in the catalytic mechanism. A Radical SAM core domain is found at 97–329 (QHYGLSVCVT…KKNGVNCVVR (233 aa)). A disulfide bridge connects residues C104 and C340. The [4Fe-4S] cluster site is built by C111, C115, and C118. Residues 163–164 (GE), S195, 218–220 (SLH), and N296 contribute to the S-adenosyl-L-methionine site. The S-methylcysteine intermediate role is filled by C340.

It belongs to the radical SAM superfamily. RlmN family. [4Fe-4S] cluster serves as cofactor.

It is found in the cytoplasm. The enzyme catalyses adenosine(2503) in 23S rRNA + 2 reduced [2Fe-2S]-[ferredoxin] + 2 S-adenosyl-L-methionine = 2-methyladenosine(2503) in 23S rRNA + 5'-deoxyadenosine + L-methionine + 2 oxidized [2Fe-2S]-[ferredoxin] + S-adenosyl-L-homocysteine. It carries out the reaction adenosine(37) in tRNA + 2 reduced [2Fe-2S]-[ferredoxin] + 2 S-adenosyl-L-methionine = 2-methyladenosine(37) in tRNA + 5'-deoxyadenosine + L-methionine + 2 oxidized [2Fe-2S]-[ferredoxin] + S-adenosyl-L-homocysteine. Specifically methylates position 2 of adenine 2503 in 23S rRNA and position 2 of adenine 37 in tRNAs. The sequence is that of Probable dual-specificity RNA methyltransferase RlmN from Streptococcus suis (strain 98HAH33).